The primary structure comprises 218 residues: Thiopurine S-methyltransferase (218 aa).

Positions 10, 45, 66, and 123 each coordinate S-adenosyl-L-methionine.

Belongs to the class I-like SAM-binding methyltransferase superfamily. TPMT family.

The protein resides in the cytoplasm. It catalyses the reaction S-adenosyl-L-methionine + a thiopurine = S-adenosyl-L-homocysteine + a thiopurine S-methylether.. The sequence is that of Thiopurine S-methyltransferase from Xanthomonas axonopodis pv. citri (strain 306).